We begin with the raw amino-acid sequence, 182 residues long: RNA pyrophosphohydrolase (182 aa).

One can recognise a Nudix hydrolase domain in the interval Gly6–Asn149. The Nudix box signature appears at Gly38 to Gly59. The interval Pro162 to Glu182 is disordered.

The protein belongs to the Nudix hydrolase family. RppH subfamily. A divalent metal cation serves as cofactor.

Functionally, accelerates the degradation of transcripts by removing pyrophosphate from the 5'-end of triphosphorylated RNA, leading to a more labile monophosphorylated state that can stimulate subsequent ribonuclease cleavage. In Dechloromonas aromatica (strain RCB), this protein is RNA pyrophosphohydrolase.